The chain runs to 270 residues: A-type potassium channel modulatory protein KCNIP2 (270 aa).

Residues 1 to 17 (MRGQGRKESLSDSRDLD) show a composition bias toward basic and acidic residues. Residues 1–33 (MRGQGRKESLSDSRDLDGSYDQLTGHPPGPTKK) form a disordered region. Ser9 is subject to Phosphoserine. 2 S-palmitoyl cysteine lipidation sites follow: Cys45 and Cys46. In terms of domain architecture, EF-hand 1; degenerate spans 81-137 (FELSTVCHRPEGLEQLQEQTKFTRKELQVLYRGFKNECPSGIVNEENFKQIYSQFFP). EF-hand domains are found at residues 140–175 (DSST…ILRG), 176–211 (TIDD…IYDM), and 224–259 (APRE…DENI). Positions 153, 155, 157, 159, 164, 189, 191, 193, 195, 200, 237, 239, 241, and 248 each coordinate Ca(2+). The interval 257–270 (ENIMRSMQLFDNVI) is interaction with KCND2.

The protein belongs to the recoverin family. Component of heteromultimeric potassium channels. Identified in potassium channel complexes containing KCND1, KCND2, KCND3, KCNIP1, KCNIP2, KCNIP3, KCNIP4, DPP6 and DPP10. The KCND2-KCNIP2 channel complex contains four KCND2 and four KCNIP2 subunits. Interacts with KCND2. Probably part of a complex consisting of KCNIP1, KCNIP2 isoform 3 and KCND2. At least isoform 2 and isoform 3 can self-associate to form homodimers and homotetramers. Isoform 3 interacts with KCNIP1 in a calcium-dependent manner. Interacts with KCND3; each KCNIP2 monomer interacts with two adjacent KCND3 subunits, through both the N-terminal inactivation ball of a KCND3 subunit and a C-terminal helix from the adjacent KCND3 subunit, clamping them together; this interaction modulates the channel gating kinetics. Post-translationally, palmitoylated. Palmitoylation enhances association with the plasma membrane. In terms of tissue distribution, expressed in heart ventricle with isoform 1 as most prominent form.

It localises to the cell membrane. In terms of biological role, regulatory subunit of Kv4/D (Shal)-type voltage-gated rapidly inactivating A-type potassium channels. Modulates channel density, inactivation kinetics and rate of recovery from inactivation in a calcium-dependent and isoform-specific manner. Involved in KCND2 and KCND3 trafficking to the cell surface. May be required for the expression of I(To) currents in the heart. This Mustela putorius furo (European domestic ferret) protein is A-type potassium channel modulatory protein KCNIP2.